The primary structure comprises 128 residues: Large ribosomal subunit protein bL19 (128 aa).

The protein belongs to the bacterial ribosomal protein bL19 family.

In terms of biological role, this protein is located at the 30S-50S ribosomal subunit interface and may play a role in the structure and function of the aminoacyl-tRNA binding site. In Azoarcus sp. (strain BH72), this protein is Large ribosomal subunit protein bL19.